The primary structure comprises 352 residues: C-X-C chemokine receptor type 4 (352 aa).

Residues M1–Y21 are important for chemokine binding and signaling. Topologically, residues M1–R38 are extracellular. Y7 is subject to Sulfotyrosine. N-linked (GlcNAc...) asparagine glycosylation is present at N11. The residue at position 12 (Y12) is a Sulfotyrosine. S18 is a glycosylation site (O-linked (Xyl...) (chondroitin sulfate) serine). Sulfotyrosine is present on Y21. Cystine bridges form between C28-C274 and C109-C186. Residues I39–M63 traverse the membrane as a helical segment. Topologically, residues G64–R77 are cytoplasmic. A helical transmembrane segment spans residues L78–V99. The tract at residues W94 to D97 is chemokine binding. The Extracellular segment spans residues A100–K110. Residues A111–I130 traverse the membrane as a helical segment. The interval H113 to T117 is chemokine binding. Over S131 to K154 the chain is Cytoplasmic. The Important for signaling motif lies at D133–Y135. Residues Y135–P147 form an involved in dimerization; when bound to chemokine region. Residues V155–F174 form a helical membrane-spanning segment. Residues A175–W195 are Extracellular-facing. The chemokine binding, important for signaling stretch occupies residues C186–Y190. An involved in dimerization region spans residues P191–L210. Residues V196–L216 form a helical membrane-spanning segment. Topologically, residues S217–T241 are cytoplasmic. Residues V242–I261 traverse the membrane as a helical segment. The Extracellular segment spans residues D262–K282. The involved in dimerization stretch occupies residues L266–E268. The helical transmembrane segment at W283–Y302 threads the bilayer. Residues A303–S352 are Cytoplasmic-facing. Phosphoserine occurs at positions 319 and 321. S324 and S325 each carry phosphoserine; by PKC and GRK6. Residues L329–S352 are disordered. Phosphoserine; by GRK6 is present on S330. Residue K331 forms a Glycyl lysine isopeptide (Lys-Gly) (interchain with G-Cter in ubiquitin) linkage. Residues H337–S352 show a composition bias toward low complexity. At S339 the chain carries Phosphoserine; by GRK6. Residues S348 and S351 each carry the phosphoserine modification.

The protein belongs to the G-protein coupled receptor 1 family. Monomer. Can form homodimers. Interacts with CD164. Interacts with ARRB2; the interaction is dependent on the C-terminal phosphorylation of CXCR4 and allows activation of MAPK1 and MAPK3. Interacts with ARR3; the interaction is dependent on the C-terminal phosphorylation of CXCR4 and modulates calcium mobilization. Interacts with RNF113A; the interaction, enhanced by CXCL12, promotes CXCR4 ubiquitination and subsequent degradation. Interacts (via the cytoplasmic C-terminal) with ITCH (via the WW domains I and II); the interaction, enhanced by CXCL12, promotes CXCR4 ubiquitination and leads to its degradation. Interacts with extracellular ubiquitin. Interacts with DBN1; this interaction is enhanced by antigenic stimulation. Following LPS binding, may form a complex with GDF5, HSP90AA1 and HSPA8. Post-translationally, phosphorylated on agonist stimulation. Rapidly phosphorylated on serine and threonine residues in the C-terminal. Phosphorylation at Ser-324 and Ser-325 leads to recruitment of ITCH, ubiquitination and protein degradation. In terms of processing, ubiquitinated after ligand binding, leading to its degradation. Ubiquitinated by ITCH at the cell membrane on agonist stimulation. The ubiquitin-dependent mechanism, endosomal sorting complex required for transport (ESCRT), then targets CXCR4 for lysosomal degradation. This process is dependent also on prior Ser-/Thr-phosphorylation in the C-terminal of CXCR4. Also binding of ARRB1 to STAM negatively regulates CXCR4 sorting to lysosomes though modulating ubiquitination of SFR5S. Sulfation is required for efficient binding of CXCL12/SDF-1alpha and promotes its dimerization. Post-translationally, O- and N-glycosylated. N-glycosylation can mask coreceptor function. The O-glycosylation chondroitin sulfate attachment does not affect interaction with CXCL12/SDF-1alpha nor its coreceptor activity.

It is found in the cell membrane. Its subcellular location is the cell junction. The protein resides in the early endosome. The protein localises to the late endosome. It localises to the lysosome. Its function is as follows. Receptor for the C-X-C chemokine CXCL12/SDF-1 that transduces a signal by increasing intracellular calcium ion levels and enhancing MAPK1/MAPK3 activation. Involved in the AKT signaling cascade. Plays a role in regulation of cell migration, e.g. during wound healing. Acts as a receptor for extracellular ubiquitin; leading to enhanced intracellular calcium ions and reduced cellular cAMP levels. Binds bacterial lipopolysaccharide (LPS) et mediates LPS-induced inflammatory response, including TNF secretion by monocytes. Involved in hematopoiesis and in cardiac ventricular septum formation. Also plays an essential role in vascularization of the gastrointestinal tract, probably by regulating vascular branching and/or remodeling processes in endothelial cells. Involved in cerebellar development. In the CNS, could mediate hippocampal-neuron survival. This is C-X-C chemokine receptor type 4 (CXCR4) from Saimiri sciureus (Common squirrel monkey).